An 815-amino-acid polypeptide reads, in one-letter code: Phenylalanine--tRNA ligase beta subunit (815 aa).

The 115-residue stretch at 39-153 (ASHAQGVVVG…NVPDLGQPVG (115 aa)) folds into the tRNA-binding domain. The B5 domain maps to 414–498 (KSAEPVKLRR…RLVGFDRFEA (85 aa)). 4 residues coordinate Mg(2+): Asp476, Asp482, Glu485, and Glu486. The 94-residue stretch at 721 to 814 (PTVPAMELDL…LVKQFSAELR (94 aa)) folds into the FDX-ACB domain.

The protein belongs to the phenylalanyl-tRNA synthetase beta subunit family. Type 1 subfamily. Tetramer of two alpha and two beta subunits. Mg(2+) is required as a cofactor.

It localises to the cytoplasm. The catalysed reaction is tRNA(Phe) + L-phenylalanine + ATP = L-phenylalanyl-tRNA(Phe) + AMP + diphosphate + H(+). The chain is Phenylalanine--tRNA ligase beta subunit from Prochlorococcus marinus (strain MIT 9313).